A 930-amino-acid chain; its full sequence is Nonribosomal peptide synthetase acyN (930 aa).

The interval 15–436 (LDPQDNKISV…AGRAKETIIV (422 aa)) is adenylation (A) domain. Positions 567-646 (APSNETEATI…GLAGTLETLM (80 aa)) constitute a Carrier domain. Position 604 is an O-(pantetheine 4'-phosphoryl)serine (Ser-604). The thioesterase (TE) domain stretch occupies residues 665-914 (PLWLVHPGVG…HYTMLGPDNI (250 aa)).

It belongs to the NRP synthetase family.

The enzyme catalyses 2 3-phenylpyruvate + 2 ATP = polyporic acid + 2 AMP + 2 diphosphate + H(+). It functions in the pathway secondary metabolite biosynthesis. Hydroxyphenylpyruvate acts more like a competitive inhibitor rather than a substrate. Nonribosomal peptide synthetase that mediates the biosynthesis of polyporic acid via the condensation of 2 phenylpyruvate units. Polyporic acid is further hydroxylaed by the cytochrome P450 monooxygenase MO6277 into less toxic ascocorynin. The chain is Nonribosomal peptide synthetase acyN from Ascocoryne sarcoides (Purple jellydisc fungus).